The following is a 352-amino-acid chain: C-glycoside deglycosidase alpha subunit (352 aa).

Glu-147 contacts Mn(2+). The active-site Proton acceptor is the His-149. The Mn(2+) site is built by Asp-179, His-269, and Glu-305.

This sequence belongs to the C-glycoside deglycosidase alpha subunit family. Heterodimer composed of an alpha subunit (CarB2) and a beta subunit (CarC2). A divalent metal cation is required as a cofactor.

The catalysed reaction is 3''-dehydroorientin = 1,5-anhydro-D-erythro-hex-1-en-3-ulose + luteolin. Its activity is regulated as follows. Activity is strongly reduced in the presence of chelating agents. In terms of biological role, carbon-carbon bond-cleaving enzyme which participates in the metabolism of C-glycosides. Acts on the C8-glycosylated compound 3''-dehydroorientin (3''-oxo-orientin). The chain is C-glycoside deglycosidase alpha subunit from Arthrobacter globiformis (strain ATCC 8010 / DSM 20124 / JCM 1332 / NBRC 12137 / NCIMB 8907 / NRRL B-2979 / 168).